The primary structure comprises 275 residues: 3-methyl-2-oxobutanoate hydroxymethyltransferase (275 aa).

Mg(2+) is bound by residues Asp-44 and Asp-83. 3-methyl-2-oxobutanoate-binding positions include 44–45 (DS), Asp-83, and Lys-113. Residue Glu-115 participates in Mg(2+) binding. Glu-182 functions as the Proton acceptor in the catalytic mechanism.

This sequence belongs to the PanB family. In terms of assembly, homodecamer; pentamer of dimers. Mg(2+) serves as cofactor.

The protein resides in the cytoplasm. It carries out the reaction 3-methyl-2-oxobutanoate + (6R)-5,10-methylene-5,6,7,8-tetrahydrofolate + H2O = 2-dehydropantoate + (6S)-5,6,7,8-tetrahydrofolate. Its pathway is cofactor biosynthesis; (R)-pantothenate biosynthesis; (R)-pantoate from 3-methyl-2-oxobutanoate: step 1/2. Catalyzes the reversible reaction in which hydroxymethyl group from 5,10-methylenetetrahydrofolate is transferred onto alpha-ketoisovalerate to form ketopantoate. The sequence is that of 3-methyl-2-oxobutanoate hydroxymethyltransferase from Clostridium botulinum (strain 657 / Type Ba4).